The sequence spans 354 residues: Uroporphyrinogen decarboxylase (354 aa).

Substrate-binding positions include 27–31 (RQAGR), Asp77, Tyr154, Thr209, and His327.

Belongs to the uroporphyrinogen decarboxylase family. In terms of assembly, homodimer.

Its subcellular location is the cytoplasm. It carries out the reaction uroporphyrinogen III + 4 H(+) = coproporphyrinogen III + 4 CO2. It participates in porphyrin-containing compound metabolism; protoporphyrin-IX biosynthesis; coproporphyrinogen-III from 5-aminolevulinate: step 4/4. Catalyzes the decarboxylation of four acetate groups of uroporphyrinogen-III to yield coproporphyrinogen-III. This Hydrogenovibrio crunogenus (strain DSM 25203 / XCL-2) (Thiomicrospira crunogena) protein is Uroporphyrinogen decarboxylase.